The primary structure comprises 423 residues: Enolase (423 aa).

Glutamine 162 contacts (2R)-2-phosphoglycerate. The active-site Proton donor is glutamate 204. Mg(2+) is bound by residues aspartate 241, glutamate 284, and aspartate 311. Lysine 336, arginine 365, serine 366, and lysine 387 together coordinate (2R)-2-phosphoglycerate. Lysine 336 acts as the Proton acceptor in catalysis.

It belongs to the enolase family. The cofactor is Mg(2+).

Its subcellular location is the cytoplasm. The protein localises to the secreted. The protein resides in the cell surface. It catalyses the reaction (2R)-2-phosphoglycerate = phosphoenolpyruvate + H2O. It participates in carbohydrate degradation; glycolysis; pyruvate from D-glyceraldehyde 3-phosphate: step 4/5. Its function is as follows. Catalyzes the reversible conversion of 2-phosphoglycerate (2-PG) into phosphoenolpyruvate (PEP). It is essential for the degradation of carbohydrates via glycolysis. This is Enolase from Bartonella bacilliformis (strain ATCC 35685 / KC583 / Herrer 020/F12,63).